The chain runs to 91 residues: MPRSTKKGPFIDHHLLKKVEEANANNSKRPIKTWSRRSVVMPDMVGLTIAIHNGRQHVPVLINENMVGHKLGEFAVTRSFRGHAADKKSKR.

Belongs to the universal ribosomal protein uS19 family.

Its function is as follows. Protein S19 forms a complex with S13 that binds strongly to the 16S ribosomal RNA. The protein is Small ribosomal subunit protein uS19 of Halorhodospira halophila (strain DSM 244 / SL1) (Ectothiorhodospira halophila (strain DSM 244 / SL1)).